We begin with the raw amino-acid sequence, 566 residues long: Protein kintoun (566 aa).

3 disordered regions span residues 183–298 (KYKG…TAPQ), 399–467 (EEEE…AETG), and 493–552 (QLEE…ESRI). Positions 208-290 (PQQTTGPQQP…HQPTDPQQTT (83 aa)) are enriched in low complexity. The span at 399–424 (EEEERRAEEEESRKGGDEDGELHPDC) shows a compositional bias: basic and acidic residues. A compositionally biased stretch (low complexity) spans 440 to 467 (TPAADTHTPAADTHTPAADTHTPAAETG). The segment covering 535–550 (DPAHTDPAHTDPEMES) has biased composition (basic and acidic residues).

It belongs to the PIH1 family. Kintoun subfamily.

It is found in the cytoplasm. Its subcellular location is the dynein axonemal particle. In terms of biological role, required for cytoplasmic pre-assembly of axonemal dyneins, thereby playing a central role in motility in cilia and flagella. Involved in pre-assembly of dynein arm complexes in the cytoplasm before intraflagellar transport loads them for the ciliary compartment. This is Protein kintoun from Danio rerio (Zebrafish).